The chain runs to 60 residues: UPF0434 protein Rfer_3156 (60 aa).

Belongs to the UPF0434 family.

The sequence is that of UPF0434 protein Rfer_3156 from Albidiferax ferrireducens (strain ATCC BAA-621 / DSM 15236 / T118) (Rhodoferax ferrireducens).